Reading from the N-terminus, the 159-residue chain is Cyclic pyranopterin monophosphate synthase (159 aa).

Substrate is bound by residues 75–77 (LCH) and 113–114 (ME). Asp-128 is an active-site residue.

The protein belongs to the MoaC family. Homohexamer; trimer of dimers.

It carries out the reaction (8S)-3',8-cyclo-7,8-dihydroguanosine 5'-triphosphate = cyclic pyranopterin phosphate + diphosphate. Its pathway is cofactor biosynthesis; molybdopterin biosynthesis. In terms of biological role, catalyzes the conversion of (8S)-3',8-cyclo-7,8-dihydroguanosine 5'-triphosphate to cyclic pyranopterin monophosphate (cPMP). The sequence is that of Cyclic pyranopterin monophosphate synthase from Yersinia pseudotuberculosis serotype O:1b (strain IP 31758).